The primary structure comprises 305 residues: uncharacterized protein (305 aa).

The first 29 residues, 1 to 29, serve as a signal peptide directing secretion; that stretch reads MSKAVSEILGYMYIFGIVMAVLAIVFVQV.

This is an uncharacterized protein from Archaeoglobus fulgidus (strain ATCC 49558 / DSM 4304 / JCM 9628 / NBRC 100126 / VC-16).